The following is a 30-amino-acid chain: Serum amyloid P-component (30 aa).

One can recognise a Pentraxin (PTX) domain in the interval A1 to F30.

This sequence belongs to the pentraxin family. In terms of assembly, homopentamer. Discoid arrangement of 5 covalently bound subunits. Ca(2+) is required as a cofactor.

The protein resides in the secreted. The chain is Serum amyloid P-component from Anarhichas lupus (Atlantic wolffish).